The sequence spans 491 residues: tRNA-2-methylthio-N(6)-dimethylallyladenosine synthase (491 aa).

The MTTase N-terminal domain occupies K54–F172. Residues C63, C99, C133, C209, C213, and C216 each contribute to the [4Fe-4S] cluster site. Positions R195–K426 constitute a Radical SAM core domain. The 63-residue stretch at E429–D491 folds into the TRAM domain.

This sequence belongs to the methylthiotransferase family. MiaB subfamily. As to quaternary structure, monomer. [4Fe-4S] cluster is required as a cofactor.

Its subcellular location is the cytoplasm. The enzyme catalyses N(6)-dimethylallyladenosine(37) in tRNA + (sulfur carrier)-SH + AH2 + 2 S-adenosyl-L-methionine = 2-methylsulfanyl-N(6)-dimethylallyladenosine(37) in tRNA + (sulfur carrier)-H + 5'-deoxyadenosine + L-methionine + A + S-adenosyl-L-homocysteine + 2 H(+). Catalyzes the methylthiolation of N6-(dimethylallyl)adenosine (i(6)A), leading to the formation of 2-methylthio-N6-(dimethylallyl)adenosine (ms(2)i(6)A) at position 37 in tRNAs that read codons beginning with uridine. The protein is tRNA-2-methylthio-N(6)-dimethylallyladenosine synthase of Malacoplasma penetrans (strain HF-2) (Mycoplasma penetrans).